A 285-amino-acid polypeptide reads, in one-letter code: Bifunctional protein FolD (285 aa).

Residues 166-168 and Ile-232 each bind NADP(+); that span reads GAS.

This sequence belongs to the tetrahydrofolate dehydrogenase/cyclohydrolase family. Homodimer.

The catalysed reaction is (6R)-5,10-methylene-5,6,7,8-tetrahydrofolate + NADP(+) = (6R)-5,10-methenyltetrahydrofolate + NADPH. It catalyses the reaction (6R)-5,10-methenyltetrahydrofolate + H2O = (6R)-10-formyltetrahydrofolate + H(+). The protein operates within one-carbon metabolism; tetrahydrofolate interconversion. Catalyzes the oxidation of 5,10-methylenetetrahydrofolate to 5,10-methenyltetrahydrofolate and then the hydrolysis of 5,10-methenyltetrahydrofolate to 10-formyltetrahydrofolate. The protein is Bifunctional protein FolD of Aliivibrio fischeri (strain MJ11) (Vibrio fischeri).